A 435-amino-acid polypeptide reads, in one-letter code: MSIITDVYAREVLDSRGNPTLEVEVYTESGAFGRGMVPSGASTGEHEAVELRDGDKSRYLGLGTQKAVDNVNNIIAEAIIGYDVRDQQAIDRAMIALDGTPNKGKLGANAILGVSIAVARAAADYLEVPLYTYLGGFNTKVLPTPMMNIINGGSHSDAPIAFQEFMIMPVGAPTFKEGLRWGAEVFHALKKILKARGLVTAVGDEGGFAPKFEGTEDGVETILKAIEAAGYEAGENGIMIGFDCASSEFYDKERKVYDYTKFEGEGAAVRTSAEQIDYLEELVNKYPIITIEDGMDENDWEGWKALTERLGKRVQLVGDDFFVTNTEYLARGIKEGAANSILIKVNQIGTLTETFEAIEMAKEAGYTAVVSHRSGETEDSTIADIAVATNAGQIKTGSLSRTDRIAKYNQLLRIEDQLGEVAQYKGIKSFYNLKK.

(2R)-2-phosphoglycerate is bound at residue Q163. The Proton donor role is filled by E205. Residues D243, E292, and D319 each coordinate Mg(2+). The (2R)-2-phosphoglycerate site is built by K344, R373, S374, and K395. The Proton acceptor role is filled by K344.

This sequence belongs to the enolase family. Mg(2+) serves as cofactor.

The protein resides in the cytoplasm. It localises to the secreted. Its subcellular location is the cell surface. It catalyses the reaction (2R)-2-phosphoglycerate = phosphoenolpyruvate + H2O. The protein operates within carbohydrate degradation; glycolysis; pyruvate from D-glyceraldehyde 3-phosphate: step 4/5. Functionally, catalyzes the reversible conversion of 2-phosphoglycerate (2-PG) into phosphoenolpyruvate (PEP). It is essential for the degradation of carbohydrates via glycolysis. The chain is Enolase from Streptococcus equi subsp. zooepidemicus (strain MGCS10565).